A 209-amino-acid polypeptide reads, in one-letter code: Large ribosomal subunit protein uL3 (209 aa).

Residues 118–152 (GFQGAIKRHGQSRGPMSHGSRYHRRPGSMGPVDPN) are disordered.

It belongs to the universal ribosomal protein uL3 family. Part of the 50S ribosomal subunit. Forms a cluster with proteins L14 and L19.

One of the primary rRNA binding proteins, it binds directly near the 3'-end of the 23S rRNA, where it nucleates assembly of the 50S subunit. This is Large ribosomal subunit protein uL3 from Bacillus licheniformis (strain ATCC 14580 / DSM 13 / JCM 2505 / CCUG 7422 / NBRC 12200 / NCIMB 9375 / NCTC 10341 / NRRL NRS-1264 / Gibson 46).